The primary structure comprises 563 residues: Src substrate protein p85 (563 aa).

Cortactin repeat units lie at residues 89-125 (ASHGYGGKFGVEQDRMDKSAVGHEYQSKLSKHCSQVD), 126-162 (SVKGFGGKFGVQTDRVDQSAVGFEYQGKTEKHASQKD), 163-199 (YSSGFGGKYGVQADRVDKSAVGFDYQGKTEKHESQKD), 200-236 (YSKGFGGKYGVDKDKVDKSAVGFEYQGKTEKHESQKD), 237-273 (YVKGFGGKFGVQTDRQDKCALGWDHQEKVQLHESQKD), and 274-310 (YKSGFGGKFGVQTERQDPSAVGFDYKEKLAKHESQQD). The Cortactin 7; truncated repeat unit spans residues 311–333 (YSKGFGGKYGVQKDRMDKNAATF). Positions 331 to 477 (ATFEDIEKPT…EAVSQREAEY (147 aa)) are disordered. The stretch at 349 to 410 (VERVANKTSS…EEQAKAKKQT (62 aa)) forms a coiled coil. A compositionally biased stretch (basic and acidic residues) spans 366-405 (LAKEKEQEDRRKAEAERAQRMAREKQEQEEARRKLEEQAK). Residues 505 to 563 (ELGITAIALYDYQAAGDDEISFDPDDIITNIEMIDDGWWRGVCKGRYGLFPANYVELRQ) enclose the SH3 domain.

Post-translationally, acetylated. In normal cells, appears to be phosphorylated on serine and threonine; in cells expressing activated forms of pp60-src, they become heavily phosphorylated on tyrosine in vitro. Tyrosine phosphorylation in transformed cells may contribute to cellular growth regulation and transformation.

Its subcellular location is the cytoplasm. The protein resides in the cytoskeleton. It localises to the cell projection. It is found in the lamellipodium. The protein localises to the ruffle. Its subcellular location is the dendrite. The protein resides in the cell membrane. It localises to the podosome. It is found in the cell junction. The protein localises to the focal adhesion. Its subcellular location is the membrane. The protein resides in the clathrin-coated pit. It localises to the dendritic spine. It is found in the cell cortex. The protein localises to the endoplasmic reticulum. Contributes to the organization of the actin cytoskeleton and cell shape. Plays a role in the formation of lamellipodia and in cell migration. Plays a role in the regulation of neuron morphology, axon growth and formation of neuronal growth cones, and may play a role in the regulation of neuronal spine density. Plays a role in focal adhesion assembly and turnover. Plays a role in intracellular protein transport and endocytosis, and in modulating the levels of potassium channels present at the cell membrane. Plays a role in endocytosis via clathrin-coated pits. The protein is Src substrate protein p85 (CTTN1) of Gallus gallus (Chicken).